An 85-amino-acid polypeptide reads, in one-letter code: RNA-binding protein KhpA (85 aa).

The KH domain occupies 32–85 (YLEYNLTVNPEDIGRVIGRQGRVASAIRTIVYSVRVSGPKRVRLTIEDGQQKNS).

It belongs to the KhpA RNA-binding protein family. Forms a complex with KhpB.

It localises to the cytoplasm. In terms of biological role, a probable RNA chaperone. Forms a complex with KhpB which binds to cellular RNA and controls its expression. Plays a role in peptidoglycan (PG) homeostasis and cell length regulation. Necessary for correct cell elongation. This is RNA-binding protein KhpA from Lactiplantibacillus plantarum (strain ATCC BAA-793 / NCIMB 8826 / WCFS1) (Lactobacillus plantarum).